Consider the following 1000-residue polypeptide: Probable coatomer subunit beta' (1000 aa).

WD repeat units follow at residues 13–52 (ARSDRVKCVDLHPVETWLLAALYNGNVHIWNYETQTLVKS), 55–94 (VCDVPVRAAKFVPRKSWVVTGSDDMHIRVFNYNTLERVHQ), 97–136 (AHSDYLRSLVVHPTLPYVISSSDDMLVKMWDWDNKWAMKQ), 140–180 (GHTH…PNFT), 183–224 (GHEK…CVQT), 227–266 (GHAQNVSSVCFHPELPLIITGSEDSTVRLWHANTYRLETT), and 351–391 (LGSS…NKDF). A disordered region spans residues 863–1000 (PRQTETQLKA…MDDLNLDEED (138 aa)). Positions 901-915 (EPEEEEEQEEFDDDQ) are enriched in acidic residues. Low complexity predominate over residues 960–969 (SASSQQSAQD). Over residues 970–1000 (FQDDTQWSDEDFGDAENGDLNMDDLNLDEED) the composition is skewed to acidic residues.

It belongs to the WD repeat COPB2 family. In terms of assembly, oligomeric complex that consists of at least the alpha, beta, beta', gamma, delta, epsilon and zeta subunits.

It is found in the cytoplasm. Its subcellular location is the golgi apparatus membrane. It localises to the cytoplasmic vesicle. The protein localises to the COPI-coated vesicle membrane. Functionally, the coatomer is a cytosolic protein complex that binds to dilysine motifs and reversibly associates with Golgi non-clathrin-coated vesicles, which further mediate biosynthetic protein transport from the ER, via the Golgi up to the trans Golgi network. Coatomer complex is required for budding from Golgi membranes, and is essential for the retrograde Golgi-to-ER transport of dilysine-tagged proteins. The protein is Probable coatomer subunit beta' (copb-2) of Caenorhabditis elegans.